A 657-amino-acid chain; its full sequence is Probable cobalt/nickel-exporting P-type ATPase (657 aa).

Transmembrane regions (helical) follow at residues 40–60 (WATV…NGAP), 62–82 (AMWW…SAWA), 101–121 (AAVG…IVIF), 268–288 (LGMV…GADL), and 299–319 (MIVA…LSAI). Asp347 functions as the 4-aspartylphosphate intermediate in the catalytic mechanism. The Mg(2+) site is built by Asp543 and Asp547. Residues 596 to 618 (VVTVNLAIAATFIAVLVLWDLFG) form a helical membrane-spanning segment.

Belongs to the cation transport ATPase (P-type) (TC 3.A.3) family. Type IB subfamily.

The protein resides in the cell membrane. Functionally, involved in heavy metal homeostasis. Probably exports nickel and cobalt ions out of the cell. The sequence is that of Probable cobalt/nickel-exporting P-type ATPase (ctpD) from Mycobacterium bovis (strain ATCC BAA-935 / AF2122/97).